The primary structure comprises 157 residues: Transcriptional repressor NrdR (157 aa).

A zinc finger spans residues 3–34; sequence CPFCNAEDTKVIDSRLVEEGTQVRRRRECLKC. One can recognise an ATP-cone domain in the interval 49 to 139; that stretch reads PRIIKRDGRR…VYRSFQDINA (91 aa).

It belongs to the NrdR family. Zn(2+) serves as cofactor.

In terms of biological role, negatively regulates transcription of bacterial ribonucleotide reductase nrd genes and operons by binding to NrdR-boxes. The polypeptide is Transcriptional repressor NrdR (Coxiella burnetii (strain CbuK_Q154) (Coxiella burnetii (strain Q154))).